The sequence spans 131 residues: Protein FAM107B (131 aa).

Residue alanine 2 is modified to N-acetylalanine. Disordered regions lie at residues 39–78 and 100–131; these read MNQK…KKKS and KLQE…AQES. The residue at position 50 (lysine 50) is an N6-acetyllysine. Residues 52 to 78 are compositionally biased toward basic and acidic residues; sequence ELQKVMEKRRRDQVIKQKEEEAQKKKS. Positions 61-112 form a coiled coil; the sequence is RRDQVIKQKEEEAQKKKSDLEIELLKRQQKLEQLELEKQKLQEEQENAPEFV.

The protein belongs to the FAM107 family.

The sequence is that of Protein FAM107B from Rattus norvegicus (Rat).